A 555-amino-acid polypeptide reads, in one-letter code: Solute carrier family 22 member 2 (555 aa).

At 1–22 (MPTTVDDVLEHGGEFHFFQKQM) the chain is on the cytoplasmic side. A helical membrane pass occupies residues 23–43 (FFLLALLSATFAPIYVGIVFL). The Extracellular portion of the chain corresponds to 44-150 (GFTPDHRCRS…LVCANSWMLD (107 aa)). Residue asparagine 72 is glycosylated (N-linked (GlcNAc...) asparagine). Residues 151 to 171 (LFQSSVNVGFFIGSMSIGYIA) form a helical membrane-spanning segment. Over 172–177 (DRFGRK) the chain is Cytoplasmic. A helical transmembrane segment spans residues 178 to 198 (LCLLTTVLINAAAGVLMAISP). Residues 199–208 (TYTWMLIFRL) lie on the Extracellular side of the membrane. A helical membrane pass occupies residues 209–229 (IQGLVSKAGWLIGYILITEFV). The Cytoplasmic portion of the chain corresponds to 230–238 (GRRYRRTVG). Residues 239 to 259 (IFYQVAYTVGLLVLAGVAYAL) form a helical membrane-spanning segment. The Extracellular portion of the chain corresponds to 260–263 (PHWR). A helical membrane pass occupies residues 264–284 (WLQFTVSLPNFFFLLYYWCIP). The Proline-rich sequence signature appears at 284 to 288 (PESPR). Residues 285 to 348 (ESPRWLISQN…VRTPQIRKHT (64 aa)) are Cytoplasmic-facing. A helical transmembrane segment spans residues 349–369 (MILMYNWFTSSVLYQGLIMHM). At 370–375 (GLAGDN) the chain is on the extracellular side. Residues 376–396 (IYLDFFYSALVEFPAAFMIIL) traverse the membrane as a helical segment. Residues 397–414 (TIDRIGRRYPWAASNMVA) are Cytoplasmic-facing. The chain crosses the membrane as a helical span at residues 415-435 (GAACLASVFIPGDLQWLKIII). The Extracellular segment spans residues 436-441 (SCLGRM). A helical membrane pass occupies residues 442–462 (GITMAYEIVCLVNAELYPTFI). The Cytoplasmic portion of the chain corresponds to 463–464 (RN). Residues 465-485 (LGVHICSSMCDIGGIITPFLV) traverse the membrane as a helical segment. The Extracellular portion of the chain corresponds to 486 to 494 (YRLTNIWLE). The chain crosses the membrane as a helical span at residues 495–515 (LPLMVFGVLGLVAGGLVLLLP). Residues 516–555 (ETKGKALPETIEEAENMQRPRKNKEKMIYLQVQKLDIPLN) are Cytoplasmic-facing.

Belongs to the major facilitator (TC 2.A.1) superfamily. Organic cation transporter (TC 2.A.1.19) family. Post-translationally, tyrosine phosphorylated by tyrosine-protein kinase YES1. In terms of tissue distribution, mainly expressed in kidney, in the cortex and medulla. Localized in testis, mostly to peritubular myoid cells and Leydig cells and also detected along the basal membrane of Sertoli cells. Expressed in brain, in neurons of the cerebral cortex and in various subcortical nuclei. In the brain, also detected in the dopaminergic regions of the substantia nigra. Expressed in tracheal and bronchial ciliated epithelium in the respiratory tract. Also detected in secretory phase endometrium, in scattered stromal cells. Expressed in spleen, placenta, small intestine and spinal cord. Weakly expressed in prostate, uterus and lung. As to expression, mainly expressed in kidney, bone marrow and testis. Expressed in colon, skeletal muscle, spinal cord, placenta and liver.

The protein resides in the basolateral cell membrane. It localises to the basal cell membrane. Its subcellular location is the apical cell membrane. It catalyses the reaction (R)-noradrenaline(out) = (R)-noradrenaline(in). The catalysed reaction is (R)-adrenaline(out) = (R)-adrenaline(in). The enzyme catalyses serotonin(out) = serotonin(in). It carries out the reaction dopamine(out) = dopamine(in). It catalyses the reaction histamine(out) = histamine(in). The catalysed reaction is thiamine(in) = thiamine(out). The enzyme catalyses creatinine(in) = creatinine(out). It carries out the reaction 1-methylnicotinamide(out) = 1-methylnicotinamide(in). It catalyses the reaction guanidine(out) = guanidine(in). The catalysed reaction is choline(out) = choline(in). The enzyme catalyses agmatine(out) = agmatine(in). It carries out the reaction putrescine(out) = putrescine(in). It catalyses the reaction spermidine(in) = spermidine(out). The catalysed reaction is tyramine(in) = tyramine(out). The enzyme catalyses L-histidyl-L-proline diketopiperazine(in) = L-histidyl-L-proline diketopiperazine(out). It carries out the reaction (R)-salsolinol(in) = (R)-salsolinol(out). It catalyses the reaction N-methyl-(R)-salsolinol(in) = N-methyl-(R)-salsolinol(out). The catalysed reaction is acetylcholine(in) = acetylcholine(out). The enzyme catalyses prostaglandin F2alpha(out) = prostaglandin F2alpha(in). It carries out the reaction prostaglandin E2(out) = prostaglandin E2(in). Its activity is regulated as follows. Tyrosine phosphorylation of the transporter leads to activation of the transport activity. TEA uptake is activated by tyrosine phosphorylation. Inhibited by cGMP, most likely through a cGMP-binding protein that interacts with OCT2. In terms of biological role, electrogenic voltage-dependent transporter that mediates the transport of a variety of organic cations such as endogenous bioactive amines, cationic drugs and xenobiotics. Functions as a Na(+)-independent, bidirectional uniporter. Cation cellular uptake or release is driven by the electrochemical potential, i.e. membrane potential and concentration gradient. However, may also engage electroneutral cation exchange when saturating concentrations of cation substrates are reached. Predominantly expressed at the basolateral membrane of hepatocytes and proximal tubules and involved in the uptake and disposition of cationic compounds by hepatic and renal clearance from the blood flow. Implicated in monoamine neurotransmitters uptake such as histamine, dopamine, adrenaline/epinephrine, noradrenaline/norepinephrine, serotonin and tyramine, thereby supporting a physiological role in the central nervous system by regulating interstitial concentrations of neurotransmitters. Also capable of transporting dopaminergic neuromodulators cyclo(his-pro), salsolinol and N-methyl-salsolinol, thereby involved in the maintenance of dopaminergic cell integrity in the central nervous system. Mediates the bidirectional transport of acetylcholine (ACh) at the apical membrane of ciliated cell in airway epithelium, thereby playing a role in luminal release of ACh from bronchial epithelium. Also transports guanidine and endogenous monoamines such as vitamin B1/thiamine, creatinine and N-1-methylnicotinamide (NMN). Mediates the uptake and efflux of quaternary ammonium compound choline. Mediates the bidirectional transport of polyamine agmatine and the uptake of polyamines putrescine and spermidine. Able to transport non-amine endogenous compounds such as prostaglandin E2 (PGE2) and prostaglandin F2-alpha (PGF2-alpha). Also involved in the uptake of xenobiotic 4-(4-(dimethylamino)styryl)-N-methylpyridinium (ASP). May contribute to regulate the transport of organic compounds in testis across the blood-testis-barrier. In contrast with isoform 1, not able to transport guanidine, creatinine, cimetidine and metformin. The polypeptide is Solute carrier family 22 member 2 (Homo sapiens (Human)).